We begin with the raw amino-acid sequence, 359 residues long: MAISRLLVEKFRNLTAVDLDFDPCFNFLIGNNGSGKTSLLEAIFYLGHGRSFKSAVTNRIISYDEPHFTLFGQIQESQHQWSVGLQKLRQGNTLVKINGEDGNKISDLAHLLPMQLITPEGLTLLNGGPSYRRAFLDWGLFHHQTSFYSAWSNLNRLLKQRNAALAQNQPYSAIKIWDVELAKLAHQVSQWRAEYAEALRPEIEQTCQLFLPELEINVSFHQGWEKNADYYEILQQNFERDRALNYTFSGPQKADFRFKAQGLPVEDVLSRGQLKLLMCVLRLAQGEHLMKEKQRHCIFLIDDFASELDQYKRALLAERLQQSGSQVFVTAITQRQLKEMQVENKKMFSVHNGIINALN.

30–37 (GNNGSGKT) contacts ATP.

It belongs to the RecF family.

It localises to the cytoplasm. Its function is as follows. The RecF protein is involved in DNA metabolism; it is required for DNA replication and normal SOS inducibility. RecF binds preferentially to single-stranded, linear DNA. It also seems to bind ATP. The protein is DNA replication and repair protein RecF of Haemophilus influenzae (strain 86-028NP).